The following is a 414-amino-acid chain: Tryptophan synthase beta chain (414 aa).

The tract at residues 1–26 (MVSTFSRQDQNYKNDDLNQPSKEGRF) is disordered. Residues 10–26 (QNYKNDDLNQPSKEGRF) show a composition bias toward basic and acidic residues. An N6-(pyridoxal phosphate)lysine modification is found at Lys109.

It belongs to the TrpB family. Tetramer of two alpha and two beta chains. Requires pyridoxal 5'-phosphate as cofactor.

It carries out the reaction (1S,2R)-1-C-(indol-3-yl)glycerol 3-phosphate + L-serine = D-glyceraldehyde 3-phosphate + L-tryptophan + H2O. The protein operates within amino-acid biosynthesis; L-tryptophan biosynthesis; L-tryptophan from chorismate: step 5/5. In terms of biological role, the beta subunit is responsible for the synthesis of L-tryptophan from indole and L-serine. In Prochlorococcus marinus (strain MIT 9312), this protein is Tryptophan synthase beta chain.